Here is a 393-residue protein sequence, read N- to C-terminus: Dual-specificity RNA methyltransferase RlmN (393 aa).

The segment at 1-22 (MSEQLLSELSPVAATSPSPAPA) is disordered. Over residues 10–22 (SPVAATSPSPAPA) the composition is skewed to low complexity. The active-site Proton acceptor is the Glu-114. Residues 120 to 358 (EDDRATLCVS…TTIVRKTRGD (239 aa)) enclose the Radical SAM core domain. A disulfide bond links Cys-127 and Cys-364. [4Fe-4S] cluster contacts are provided by Cys-134, Cys-138, and Cys-141. Residues 188-189 (GE), Ser-220, 242-244 (SLH), and Asn-321 contribute to the S-adenosyl-L-methionine site. Residue Cys-364 is the S-methylcysteine intermediate of the active site.

Belongs to the radical SAM superfamily. RlmN family. Requires [4Fe-4S] cluster as cofactor.

The protein resides in the cytoplasm. It carries out the reaction adenosine(2503) in 23S rRNA + 2 reduced [2Fe-2S]-[ferredoxin] + 2 S-adenosyl-L-methionine = 2-methyladenosine(2503) in 23S rRNA + 5'-deoxyadenosine + L-methionine + 2 oxidized [2Fe-2S]-[ferredoxin] + S-adenosyl-L-homocysteine. It catalyses the reaction adenosine(37) in tRNA + 2 reduced [2Fe-2S]-[ferredoxin] + 2 S-adenosyl-L-methionine = 2-methyladenosine(37) in tRNA + 5'-deoxyadenosine + L-methionine + 2 oxidized [2Fe-2S]-[ferredoxin] + S-adenosyl-L-homocysteine. Its function is as follows. Specifically methylates position 2 of adenine 2503 in 23S rRNA and position 2 of adenine 37 in tRNAs. m2A2503 modification seems to play a crucial role in the proofreading step occurring at the peptidyl transferase center and thus would serve to optimize ribosomal fidelity. The chain is Dual-specificity RNA methyltransferase RlmN from Sodalis glossinidius (strain morsitans).